Consider the following 150-residue polypeptide: Ribonuclease H (150 aa).

Residues 3-144 (GEDIVEIYTD…ADALARQGMA (142 aa)) form the RNase H type-1 domain. Mg(2+) contacts are provided by Asp12, Glu50, Asp72, and Asp136.

This sequence belongs to the RNase H family. In terms of assembly, monomer. Mg(2+) serves as cofactor.

Its subcellular location is the cytoplasm. It catalyses the reaction Endonucleolytic cleavage to 5'-phosphomonoester.. Its function is as follows. Endonuclease that specifically degrades the RNA of RNA-DNA hybrids. The sequence is that of Ribonuclease H from Parvibaculum lavamentivorans (strain DS-1 / DSM 13023 / NCIMB 13966).